We begin with the raw amino-acid sequence, 504 residues long: 5-epiaristolochene 1,3-dihydroxylase (504 aa).

Residues 2–22 (QFFSLVSIFLFLSFLFLLRKW) traverse the membrane as a helical segment. Position 442 (C442) interacts with heme.

The protein belongs to the cytochrome P450 family. It depends on heme as a cofactor.

It localises to the membrane. The enzyme catalyses (+)-5-epi-aristolochene + 2 reduced [NADPH--hemoprotein reductase] + 2 O2 = capsidiol + 2 oxidized [NADPH--hemoprotein reductase] + 2 H2O + 2 H(+). With respect to regulation, inhibited by ancymidol and ketoconazole. In terms of biological role, involved in the biosynthesis of capsidiol. Catalyzes the successive and independent hydroxylations at the C1 and C3 positions of 5-epiaristolochene. The second hydroxylation step is 8-fold more efficient than the first hydroxylation reaction. Capable of utilizing premnaspirodiene as a substrate. The sequence is that of 5-epiaristolochene 1,3-dihydroxylase (CYP71D20) from Nicotiana tabacum (Common tobacco).